Consider the following 376-residue polypeptide: MAKRDYYEVLGVNRDASDNEIKKAYRKLAMKHHPDRNPDNKDSEDHFKEAKNAYEILSDAQKRAAYDRYGHAGVDPSAGAGPGGQGFDGFADAFSDIFGDIFGGAGGAGRGRSNVYRGADLRYNLEISLEEAARGADKTIRIPTVEECETCHGSGAKPGTQPKPCPTCGGAGQVRIQQGFFSIQQTCPKCHGTGRIIPDPCRDCGGAGRVKRQKTLEVKIPAGIDEGMRLRHAGHGEPGVNGGPPGDLYVEIHIRAHPVFQRDHDDLHCEMPISITTAALGGEIEIPTLEGMARLKIPAETQSGKVFRLRGKGIRNVRSQAHGDLMCHVVVETPVNLTERQKELLREFEEVSSSDADRHNPKAKSWMDKVKDFFGA.

The J domain occupies 5–70 (DYYEVLGVNR…QKRAAYDRYG (66 aa)). The CR-type zinc finger occupies 135 to 213 (GADKTIRIPT…CGGAGRVKRQ (79 aa)). The Zn(2+) site is built by cysteine 148, cysteine 151, cysteine 165, cysteine 168, cysteine 187, cysteine 190, cysteine 201, and cysteine 204. 4 CXXCXGXG motif repeats span residues 148–155 (CETCHGSG), 165–172 (CPTCGGAG), 187–194 (CPKCHGTG), and 201–208 (CRDCGGAG).

Belongs to the DnaJ family. As to quaternary structure, homodimer. It depends on Zn(2+) as a cofactor.

The protein localises to the cytoplasm. Functionally, participates actively in the response to hyperosmotic and heat shock by preventing the aggregation of stress-denatured proteins and by disaggregating proteins, also in an autonomous, DnaK-independent fashion. Unfolded proteins bind initially to DnaJ; upon interaction with the DnaJ-bound protein, DnaK hydrolyzes its bound ATP, resulting in the formation of a stable complex. GrpE releases ADP from DnaK; ATP binding to DnaK triggers the release of the substrate protein, thus completing the reaction cycle. Several rounds of ATP-dependent interactions between DnaJ, DnaK and GrpE are required for fully efficient folding. Also involved, together with DnaK and GrpE, in the DNA replication of plasmids through activation of initiation proteins. This is Chaperone protein DnaJ 2 from Aromatoleum aromaticum (strain DSM 19018 / LMG 30748 / EbN1) (Azoarcus sp. (strain EbN1)).